The following is a 617-amino-acid chain: KIF-binding protein (617 aa).

The segment at 48 to 83 (ALLGPAPEDDDERAADDGPVDQALGAGEPRDAEGPG) is disordered. Position 174 is a phosphoserine (S174).

Belongs to the KIF-binding protein family. As to quaternary structure, interacts with KIF1B; positively regulates KIF1B microtubule motor activity. Interacts with STMN2.

Its subcellular location is the cytoplasm. It localises to the cytoskeleton. Activator of KIF1B plus-end-directed microtubule motor activity. Required for organization of axonal microtubules, and axonal outgrowth and maintenance during peripheral and central nervous system development. In Rattus norvegicus (Rat), this protein is KIF-binding protein (Kifbp).